Reading from the N-terminus, the 954-residue chain is Chromosomal passenger complex protein BIR1 (954 aa).

2 BIR repeats span residues 20–117 (RLRT…LLIY) and 153–241 (RKFT…YFFQ). Zn(2+)-binding residues include C208, C211, H228, and C237. The segment at 375 to 419 (NVQLTQSSSPIKKKRKFKRISPRKIFDEEDSEHSLNNNSANGDNK) is disordered. A compositionally biased stretch (basic residues) spans 385–396 (IKKKRKFKRISP). Phosphoserine is present on residues S477, S508, and S552. 2 disordered regions span residues 541-645 (DIDR…SGKV) and 661-685 (FSASDFSPSSQSEQSSKSSSVISTP). Over residues 556–583 (PKTHELIRDNSEKREAQNGEFRHQKDST) the composition is skewed to basic and acidic residues. A Phosphoserine modification is found at S587. The span at 593–604 (SNKSGDNSSNIT) shows a compositional bias: polar residues. Residues S751 and S765 each carry the phosphoserine modification. The segment at 798–839 (LVSGTSSYPRNSRLEEQRKETSTSLADNSKKGSSFNEGNNEK) is disordered. Basic and acidic residues predominate over residues 809 to 818 (SRLEEQRKET). A compositionally biased stretch (polar residues) spans 819 to 835 (STSLADNSKKGSSFNEG).

In terms of assembly, component of the CPC complex at least composed of IPL1, BIR1 and SLI15. Interacts with CBF2/NDC10. Interacts with CBF3D/SKP1.

Its function is as follows. Component of the chromosomal passenger complex (CPC), a complex that acts as a key regulator of chromosome segregation and cytokinesis. In Saccharomyces cerevisiae (strain ATCC 204508 / S288c) (Baker's yeast), this protein is Chromosomal passenger complex protein BIR1 (BIR1).